The chain runs to 91 residues: uncharacterized protein (91 aa).

Residues 1 to 21 form the signal peptide; sequence MKQLLASPSLQLVTYPASATA.

The protein belongs to the BhsA/McbA family.

It is found in the periplasm. This is an uncharacterized protein from Escherichia coli O157:H7.